We begin with the raw amino-acid sequence, 199 residues long: Glycerol-3-phosphate acyltransferase (199 aa).

5 helical membrane passes run 5-25, 54-74, 82-102, 114-134, and 154-174; these read AYLL…IIFC, AAIG…LIAF, AIGL…FFQF, VFFS…LIVF, and YIWC…CLLI.

This sequence belongs to the PlsY family. As to quaternary structure, probably interacts with PlsX.

It is found in the cell inner membrane. The catalysed reaction is an acyl phosphate + sn-glycerol 3-phosphate = a 1-acyl-sn-glycero-3-phosphate + phosphate. It functions in the pathway lipid metabolism; phospholipid metabolism. Its function is as follows. Catalyzes the transfer of an acyl group from acyl-phosphate (acyl-PO(4)) to glycerol-3-phosphate (G3P) to form lysophosphatidic acid (LPA). This enzyme utilizes acyl-phosphate as fatty acyl donor, but not acyl-CoA or acyl-ACP. This is Glycerol-3-phosphate acyltransferase from Haemophilus ducreyi (strain 35000HP / ATCC 700724).